A 278-amino-acid chain; its full sequence is MTNQAPIPVIVNGAAGKMGREVVKAVAQAPDLNLLGAIDSSPEHQGKDAGELAGLSEPLEVPITNQLEPMLGYVAGERQGPPGVIVDFTHPDSVYDNVRSAIAYGIRPVVGTTGLSPAQIQNLADFAEKASTGCLIIPNFSIGMVLLQQAAVTASQYFDHVEIIELHHNQKADAPSGTAIQTAELLAELGKTFNSAIVEETEKIPGARGSLAEEGIRIHSVRLPGLIAHQEVIFGAPGQIYTLRHDTSDRACYMPGVLLAIRKVLQLKSLVYGLEKIL.

Residues 13 to 18 and 111 to 113 each bind NAD(+); these read GAAGKM and GTT. Catalysis depends on His167, which acts as the Proton donor/acceptor. Residue His168 participates in (S)-2,3,4,5-tetrahydrodipicolinate binding. Lys171 serves as the catalytic Proton donor. 177–178 provides a ligand contact to (S)-2,3,4,5-tetrahydrodipicolinate; the sequence is GT.

The protein belongs to the DapB family.

The protein localises to the cytoplasm. It catalyses the reaction (S)-2,3,4,5-tetrahydrodipicolinate + NAD(+) + H2O = (2S,4S)-4-hydroxy-2,3,4,5-tetrahydrodipicolinate + NADH + H(+). The enzyme catalyses (S)-2,3,4,5-tetrahydrodipicolinate + NADP(+) + H2O = (2S,4S)-4-hydroxy-2,3,4,5-tetrahydrodipicolinate + NADPH + H(+). It functions in the pathway amino-acid biosynthesis; L-lysine biosynthesis via DAP pathway; (S)-tetrahydrodipicolinate from L-aspartate: step 4/4. Its function is as follows. Catalyzes the conversion of 4-hydroxy-tetrahydrodipicolinate (HTPA) to tetrahydrodipicolinate. The sequence is that of 4-hydroxy-tetrahydrodipicolinate reductase from Nostoc sp. (strain PCC 7120 / SAG 25.82 / UTEX 2576).